Here is a 381-residue protein sequence, read N- to C-terminus: Peptidoglycan glycosyltransferase MrdB (381 aa).

10 helical membrane passes run 11 to 31 (FDLLPFVFIIPLLVVSFLLIF), 40 to 60 (KQGVYYAIGFILFWIVFFIPF), 66 to 86 (WLFVFYWACVILLALVDFMGY), 99 to 119 (FISITLQPSEPVKIAILLLLA), 132 to 152 (YDWGMFLKLSFYICLPAALIL), 156 to 176 (DLGTALIVLIMGFGILLIVGL), 180 to 200 (VWLPLFIALLVASPIAYHFLH), 263 to 283 (FGFLGAMLLFAIYIGLSLHLF), 297 to 317 (IVALGISILIFVYSSVNIAMT), and 328 to 348 (LPLFSYGGSSFITFMILFGIL).

The protein belongs to the SEDS family. MrdB/RodA subfamily.

The protein resides in the cell inner membrane. It carries out the reaction [GlcNAc-(1-&gt;4)-Mur2Ac(oyl-L-Ala-gamma-D-Glu-L-Lys-D-Ala-D-Ala)](n)-di-trans,octa-cis-undecaprenyl diphosphate + beta-D-GlcNAc-(1-&gt;4)-Mur2Ac(oyl-L-Ala-gamma-D-Glu-L-Lys-D-Ala-D-Ala)-di-trans,octa-cis-undecaprenyl diphosphate = [GlcNAc-(1-&gt;4)-Mur2Ac(oyl-L-Ala-gamma-D-Glu-L-Lys-D-Ala-D-Ala)](n+1)-di-trans,octa-cis-undecaprenyl diphosphate + di-trans,octa-cis-undecaprenyl diphosphate + H(+). It participates in cell wall biogenesis; peptidoglycan biosynthesis. In terms of biological role, peptidoglycan polymerase that is essential for cell wall elongation. This chain is Peptidoglycan glycosyltransferase MrdB, found in Helicobacter pylori (strain ATCC 700392 / 26695) (Campylobacter pylori).